The sequence spans 44 residues: Protein PsbN (44 aa).

Residues 6–26 (FFFTFFLWFLLLSATGYSIYV) form a helical membrane-spanning segment.

It belongs to the PsbN family.

The protein localises to the plastid. It localises to the chloroplast thylakoid membrane. Its function is as follows. May play a role in photosystem I and II biogenesis. The protein is Protein PsbN of Tetradesmus obliquus (Green alga).